Consider the following 182-residue polypeptide: Translation initiation factor IF-3 (182 aa).

The protein belongs to the IF-3 family. Monomer.

It is found in the cytoplasm. In terms of biological role, IF-3 binds to the 30S ribosomal subunit and shifts the equilibrium between 70S ribosomes and their 50S and 30S subunits in favor of the free subunits, thus enhancing the availability of 30S subunits on which protein synthesis initiation begins. The sequence is that of Translation initiation factor IF-3 from Endomicrobium trichonymphae.